Here is a 543-residue protein sequence, read N- to C-terminus: Chaperonin GroEL (543 aa).

ATP contacts are provided by residues 29 to 32 (TLGP), 86 to 90 (DGTTT), Gly413, 476 to 478 (NAA), and Asp492.

It belongs to the chaperonin (HSP60) family. Forms a cylinder of 14 subunits composed of two heptameric rings stacked back-to-back. Interacts with the co-chaperonin GroES.

It is found in the cytoplasm. It carries out the reaction ATP + H2O + a folded polypeptide = ADP + phosphate + an unfolded polypeptide.. Its function is as follows. Together with its co-chaperonin GroES, plays an essential role in assisting protein folding. The GroEL-GroES system forms a nano-cage that allows encapsulation of the non-native substrate proteins and provides a physical environment optimized to promote and accelerate protein folding. This Streptococcus pyogenes serotype M18 (strain MGAS8232) protein is Chaperonin GroEL.